The sequence spans 247 residues: Cytochrome c oxidase subunit 2 (247 aa).

Residues 1 to 11 (MLLIINNIINN) form the signal peptide. At 12 to 38 (DVPTPWGVYFQDSATPNHEGIIELHDN) the chain is on the mitochondrial intermembrane side. Residues 39 to 59 (IMFYLVLILCLVSWLLFSIVK) traverse the membrane as a helical segment. The Mitochondrial matrix segment spans residues 60-78 (DGSKNPLPHKYLVHGQTIE). Residues 79–101 (IIWTILPALVLLVIAFPSFILLY) traverse the membrane as a helical segment. The Mitochondrial intermembrane portion of the chain corresponds to 102 to 247 (LCDEVISPAM…KEFLTWLNEQ (146 aa)). 6 residues coordinate Cu cation: histidine 182, cysteine 217, glutamate 219, cysteine 221, histidine 225, and methionine 228. Position 219 (glutamate 219) interacts with Mg(2+).

The protein belongs to the cytochrome c oxidase subunit 2 family. In terms of assembly, component of the cytochrome c oxidase (complex IV, CIV), a multisubunit enzyme composed of a catalytic core of 3 subunits and several supernumerary subunits. The complex exists as a monomer or a dimer and forms supercomplexes (SCs) in the inner mitochondrial membrane with ubiquinol-cytochrome c oxidoreductase (cytochrome b-c1 complex, complex III, CIII). Cu cation serves as cofactor. The signal sequence of COX2 is processed by IMP1.

The protein localises to the mitochondrion inner membrane. The enzyme catalyses 4 Fe(II)-[cytochrome c] + O2 + 8 H(+)(in) = 4 Fe(III)-[cytochrome c] + 2 H2O + 4 H(+)(out). In terms of biological role, component of the cytochrome c oxidase, the last enzyme in the mitochondrial electron transport chain which drives oxidative phosphorylation. The respiratory chain contains 3 multisubunit complexes succinate dehydrogenase (complex II, CII), ubiquinol-cytochrome c oxidoreductase (cytochrome b-c1 complex, complex III, CIII) and cytochrome c oxidase (complex IV, CIV), that cooperate to transfer electrons derived from NADH and succinate to molecular oxygen, creating an electrochemical gradient over the inner membrane that drives transmembrane transport and the ATP synthase. Cytochrome c oxidase is the component of the respiratory chain that catalyzes the reduction of oxygen to water. Electrons originating from reduced cytochrome c in the intermembrane space (IMS) are transferred via the dinuclear copper A center (CU(A)) of subunit 2 and heme A of subunit 1 to the active site in subunit 1, a binuclear center (BNC) formed by heme A3 and copper B (CU(B)). The BNC reduces molecular oxygen to 2 water molecules using 4 electrons from cytochrome c in the IMS and 4 protons from the mitochondrial matrix. This Wickerhamomyces canadensis (Yeast) protein is Cytochrome c oxidase subunit 2 (COX2).